The following is a 699-amino-acid chain: Auxin response factor 1 (699 aa).

The segment at residues Phe-122 to Val-224 is a DNA-binding region (TF-B3). 2 disordered regions span residues Thr-539 to Gln-565 and Glu-680 to Phe-699. The PB1 domain maps to Arg-595–Lys-684. The span at Ser-687–Phe-699 shows a compositional bias: polar residues.

This sequence belongs to the ARF family. In terms of assembly, homodimers and heterodimers. In terms of tissue distribution, expressed in roots, culms, leaves and young panicles.

The protein localises to the nucleus. Its function is as follows. Auxin response factors (ARFs) are transcriptional factors that bind specifically to the DNA sequence 5'-TGTCTC-3' found in the auxin-responsive promoter elements (AuxREs). The protein is Auxin response factor 1 (ARF1) of Oryza sativa subsp. japonica (Rice).